Consider the following 480-residue polypeptide: Argininosuccinate lyase (480 aa).

A disordered region spans residues 1-20; sequence MTQQDGGQAGQAEPTKLWGG.

This sequence belongs to the lyase 1 family. Argininosuccinate lyase subfamily.

The protein resides in the cytoplasm. The catalysed reaction is 2-(N(omega)-L-arginino)succinate = fumarate + L-arginine. It participates in amino-acid biosynthesis; L-arginine biosynthesis; L-arginine from L-ornithine and carbamoyl phosphate: step 3/3. In Saccharopolyspora erythraea (strain ATCC 11635 / DSM 40517 / JCM 4748 / NBRC 13426 / NCIMB 8594 / NRRL 2338), this protein is Argininosuccinate lyase.